The sequence spans 110 residues: DNA-binding protein Mlab_1482 (110 aa).

It belongs to the PDCD5 family.

In Methanocorpusculum labreanum (strain ATCC 43576 / DSM 4855 / Z), this protein is DNA-binding protein Mlab_1482.